The primary structure comprises 400 residues: GTPase Obg (400 aa).

In terms of domain architecture, Obg spans 1-159; that stretch reads MRFVDEAVIT…REIRLELKVL (159 aa). Positions 160-333 constitute an OBG-type G domain; it reads ADVGLLGMPN…VVYYLMDQIE (174 aa). Residues 166–173, 191–195, 213–216, 283–286, and 314–316 contribute to the GTP site; these read GMPNAGKS, FTTMV, DIPG, NKLD, and SGL. 2 residues coordinate Mg(2+): S173 and T193.

Belongs to the TRAFAC class OBG-HflX-like GTPase superfamily. OBG GTPase family. As to quaternary structure, monomer. Requires Mg(2+) as cofactor.

It is found in the cytoplasm. In terms of biological role, an essential GTPase which binds GTP, GDP and possibly (p)ppGpp with moderate affinity, with high nucleotide exchange rates and a fairly low GTP hydrolysis rate. Plays a role in control of the cell cycle, stress response, ribosome biogenesis and in those bacteria that undergo differentiation, in morphogenesis control. This Acinetobacter baylyi (strain ATCC 33305 / BD413 / ADP1) protein is GTPase Obg.